Reading from the N-terminus, the 62-residue chain is UPF0339 protein Atu5359 (62 aa).

The protein belongs to the UPF0339 family.

The sequence is that of UPF0339 protein Atu5359 from Agrobacterium fabrum (strain C58 / ATCC 33970) (Agrobacterium tumefaciens (strain C58)).